The sequence spans 96 residues: Glutamyl-tRNA(Gln) amidotransferase subunit C (96 aa).

Belongs to the GatC family. Heterotrimer of A, B and C subunits.

The enzyme catalyses L-glutamyl-tRNA(Gln) + L-glutamine + ATP + H2O = L-glutaminyl-tRNA(Gln) + L-glutamate + ADP + phosphate + H(+). It catalyses the reaction L-aspartyl-tRNA(Asn) + L-glutamine + ATP + H2O = L-asparaginyl-tRNA(Asn) + L-glutamate + ADP + phosphate + 2 H(+). In terms of biological role, allows the formation of correctly charged Asn-tRNA(Asn) or Gln-tRNA(Gln) through the transamidation of misacylated Asp-tRNA(Asn) or Glu-tRNA(Gln) in organisms which lack either or both of asparaginyl-tRNA or glutaminyl-tRNA synthetases. The reaction takes place in the presence of glutamine and ATP through an activated phospho-Asp-tRNA(Asn) or phospho-Glu-tRNA(Gln). This Halalkalibacterium halodurans (strain ATCC BAA-125 / DSM 18197 / FERM 7344 / JCM 9153 / C-125) (Bacillus halodurans) protein is Glutamyl-tRNA(Gln) amidotransferase subunit C.